A 388-amino-acid chain; its full sequence is Putative F-box protein At3g49520 (388 aa).

An F-box domain is found at 1-47 (MTTISDLPYDLVKEIFSWVPFTSLRAVRSTCKTWNALSKNQIFGKKS).

This is Putative F-box protein At3g49520 from Arabidopsis thaliana (Mouse-ear cress).